We begin with the raw amino-acid sequence, 878 residues long: MKKVKKEKVIGPVVPVSYNRSILAAFEKQAKGKTCPLCNIKFSLASYRSHMNVCKVADDDDEIKVMASYTREEAILLRAGPEIVLGEENSGQEIPVNPKKKRRTGEEQLESTPNPPVVQAFDFDVPGPSTSSENLDPPSESSEVRSVEKEIKKSPVWENRRRSTRLAQNSQKSQSESQEAIVKKETATVLEVLASINNFETRIANSDRPTPYYVKCTVKILKKIISTMKSDGDFYADNFWLPSDIITFYRFVECLSDGAKCLLVRLFVRKPNWYHLEKLEQKYTEILNIRGAAVELMKWEFISDDSTLKTLNEALRISDITVLKNVAKKFKIDGNKNRQDLVQSLRKFALSQQSIFGGTGSVELAVLKSLKTELGTCIKIKDEMVDLFKCLFTLYCPVTTNSANVIDNPASTNVYQDLLYMMLSVENGSVEFPAPNPCPNIASFYKNRAMLMEYVTAKALESSLVLQMSNGDHDIALDLAIDAKEFLDQMPLEQKKYYESLEIHERKFTSIWVHTRCCGHATSVLEKQKKYGMAVEWQKDLLITNKDVQSCCLDSRGMWWDRMLLNLDSHLKVSVFPSYSQTKKRFFQEKTECAKMIQIALTDSSILEKELLSIQDRALKLKEMPPDFRPPLNIGTPMKRVITARTISKSLGDGRVNRFVFRDEEKEEDVECSVEEAARRWYIENDEFTTGVHDEGATWHTLFGLLFYDIIFCTDAVMASVWHSEVQDCPSDLSNTLYLKRKEKFEERFEWLKDADQETIEDNIRRIWGMKQNETNRECSWKHFQSGIEDCVSIFQCIPRPAMLSIFRRLAENYRNSRSGFPDLTLWNPEKKTVAVIEVKGPGDRLSTKQRLWLSFFADNGIKAEVCHVEAQNSRLLV.

The UBZ4-type zinc-finger motif lies at 32–59; it reads GKTCPLCNIKFSLASYRSHMNVCKVADD. The Zn(2+) site is built by Cys35, Cys38, His50, and Cys54. The disordered stretch occupies residues 88-180; that stretch reads ENSGQEIPVN…QKSQSESQEA (93 aa). The span at 142-161 shows a compositional bias: basic and acidic residues; that stretch reads SEVRSVEKEIKKSPVWENRR. Low complexity predominate over residues 168 to 179; the sequence is QNSQKSQSESQE. The Mn(2+) site is built by Glu695, Asp823, Glu838, and Val839. In terms of domain architecture, VRR-NUC spans 757–870; that stretch reads QETIEDNIRR…GIKAEVCHVE (114 aa).

This sequence belongs to the FAN1 family. Requires Mn(2+) as cofactor. The cofactor is Mg(2+).

The protein localises to the nucleus. It catalyses the reaction Hydrolytically removes 5'-nucleotides successively from the 3'-hydroxy termini of 3'-hydroxy-terminated oligonucleotides.. Nuclease required for the repair of DNA interstrand cross-links (ICL). Acts as a 5'-3' exonuclease that anchors at a cut end of DNA and cleaves DNA successively at every third nucleotide, allowing to excise an ICL from one strand through flanking incisions. In Caenorhabditis briggsae, this protein is Fanconi-associated nuclease 1 homolog (fan-1).